The primary structure comprises 444 residues: Putative GTP cyclohydrolase URC1 (444 aa).

GTP is bound at residue 268–272 (RVHDE). Positions 273, 284, and 286 each coordinate Zn(2+). 315-317 (EGR) contacts GTP. D353 functions as the Proton acceptor in the catalytic mechanism. Residue R355 is the Nucleophile of the active site. The GTP site is built by S377 and K382.

The protein belongs to the GTP cyclohydrolase II family.

It is found in the cytoplasm. It localises to the nucleus. In terms of biological role, involved in uracil catabolism. The protein is Putative GTP cyclohydrolase URC1 (URC1) of Lachancea kluyveri (Yeast).